The chain runs to 260 residues: MSVLDDIVAGVRLDLAERESATSLADLRAALADVDPPRDPMPHFRAAGSSVIAEVKRRSPSKGDLATIPDPAELARSYAAGGAAAISVLTEQRRFGGSLADLRAVRAAVDTPILRKDFIVSSYQVVEARAAGADLVLLIVAALDDDDLRRLHDEARELGLTALVEVHDEPETERAVALGAELVGVNARNLKTLAIHDDTFGRLAPLVPDDRVKVAESGIFGPDDVARFVREGARAVLVGEALVKDGDPEGAVRRMTGVES.

Belongs to the TrpC family.

The enzyme catalyses 1-(2-carboxyphenylamino)-1-deoxy-D-ribulose 5-phosphate + H(+) = (1S,2R)-1-C-(indol-3-yl)glycerol 3-phosphate + CO2 + H2O. The protein operates within amino-acid biosynthesis; L-tryptophan biosynthesis; L-tryptophan from chorismate: step 4/5. The polypeptide is Indole-3-glycerol phosphate synthase (Nocardioides sp. (strain ATCC BAA-499 / JS614)).